The following is a 147-amino-acid chain: Large ribosomal subunit protein uL16 (147 aa).

The protein belongs to the universal ribosomal protein uL16 family. In terms of assembly, part of the 50S ribosomal subunit.

Its function is as follows. Binds 23S rRNA and is also seen to make contacts with the A and possibly P site tRNAs. In Clostridium novyi (strain NT), this protein is Large ribosomal subunit protein uL16.